A 342-amino-acid polypeptide reads, in one-letter code: tRNA N6-adenosine threonylcarbamoyltransferase (342 aa).

Residues H111 and H115 each contribute to the Fe cation site. Substrate contacts are provided by residues 133–137, D166, G179, D183, and N272; that span reads AVSGG. D300 provides a ligand contact to Fe cation.

This sequence belongs to the KAE1 / TsaD family. Fe(2+) serves as cofactor.

The protein resides in the cytoplasm. The catalysed reaction is L-threonylcarbamoyladenylate + adenosine(37) in tRNA = N(6)-L-threonylcarbamoyladenosine(37) in tRNA + AMP + H(+). Its function is as follows. Required for the formation of a threonylcarbamoyl group on adenosine at position 37 (t(6)A37) in tRNAs that read codons beginning with adenine. Is involved in the transfer of the threonylcarbamoyl moiety of threonylcarbamoyl-AMP (TC-AMP) to the N6 group of A37, together with TsaE and TsaB. TsaD likely plays a direct catalytic role in this reaction. The polypeptide is tRNA N6-adenosine threonylcarbamoyltransferase (Geobacter sp. (strain M21)).